The following is a 641-amino-acid chain: XK-related protein 6 (641 aa).

2 disordered regions span residues 20-47 (LDEA…DGSE) and 84-120 (RSAA…PPPP). Residues 34–46 (PGGGGCGGGGDGS) are compositionally biased toward gly residues. Positions 107–120 (PPTPSAARPEPPPP) are enriched in pro residues. 7 helical membrane-spanning segments follow: residues 130-150 (LWIV…LWLA), 159-179 (YVYF…VQSL), 318-338 (TLPC…LASY), 372-392 (VISF…FVVV), 413-433 (WEEI…WFNV), 442-462 (MFAY…LWYF), and 473-493 (AVPA…MMLL).

The protein belongs to the XK family.

Its subcellular location is the cell membrane. In Homo sapiens (Human), this protein is XK-related protein 6.